We begin with the raw amino-acid sequence, 748 residues long: MASSPDPPSPLLVRLRESIPKAHRKLEIYFQSRASGGGECSVQPVGPSAPDTYEVKFLKKADKEKVLKKSEHEMLVHNKPVTIVLETTKKPVEDLRPRLPSLTQPVETPSSRPPSLTGSLDEALCDDIHPQDGLVSNSVDSVVQKIFLAVTAELNCDLLSKEQRASITTVCPHIIKSMEGSDGIKKVCGNFKDIEKIHHFLSEQLLEREQKRKGSEQKRKCAPQKHTPPDVEREPPDQSSIQVPVLLLEYFKHVNPGRLEFIEYKFGVNIEIQASSPNMVTVGFTSSPFGNVEEASQSFVRDFQKCSQSLKQDCISLEEHQRAKEVRQELSRCFPKLLIKGQGRTLTLLGSPADISAATEKVSQGLGLRPVKITASGYTTGIEVDSTRFKLLEPELLQEISEIEQKFNTRGKVQEKGQKTCILFVPKDKDLDLSVQSYTGFTDAFQRATWQLRTEVLSLKGLGKERARLHNTKFADNFKKEHPNVHFVTSQESVTLTGLPHHLAQAMQYVSKRMGLAPSSGEKLAMDQETPMEISSSDPHGDQQENAALPAPRGTSSSPAASKGTEDYCVICMDTISNKHVLPKCKHEFCTSCISKAMLIKPVCPVCLTSYGIQKGNQPEGTMSYSTQKGSLPGYEGCGTIVINYEIKDGIQTKEHPNPGKAYHGTRRTAYLPDNTEGRKVLDLLHEAFKHRLTFTIGYSRATGVSDVITWNDIHHKTSKFGGPANFGYPDPDYLKRVKEELKAKGIE.

The residue at position 2 (Ala-2) is an N-acetylalanine. At Ser-9 the chain carries Phosphoserine. Disordered regions lie at residues 94–117, 209–238, and 528–562; these read DLRP…PSLT, EQKR…PPDQ, and QETP…PAAS. Polar residues predominate over residues 101–117; it reads SLTQPVETPSSRPPSLT. Basic and acidic residues-rich tracts occupy residues 209 to 219 and 227 to 236; these read EQKRKGSEQKR and TPPDVEREPP. A Phosphoserine modification is found at Ser-215. Position 536 is a phosphoserine (Ser-536). An RING-type zinc finger spans residues 569-608; that stretch reads CVICMDTISNKHVLPKCKHEFCTSCISKAMLIKPVCPVCL.

This sequence belongs to the Deltex family. As to quaternary structure, homodimer and heterodimer. Can heterodimerize with DTX1, enhancing its ubiquitin ligase activity in vitro. Interacts (via N-terminus) with ADP ribosyltransferase PARP9/BAL1 (via PARP catalytic domain) forming a stable complex; the interaction is required to activate PARP9 but is dispensable for DTX3L catalytic activity. Forms a complex with STAT1 and PARP9 independently of IFNB1 or IFNG-mediated STAT1 'Tyr-701' phosphorylation. Found in a complex with PARP9, STAT1 and H2BC9. Found in a complex with E3 ligase ITCH and ESCRT-0 components HGS and STAM. Interacts (via C-terminus) with ITCH; the interaction is increased upon CXCL12 stimulation and inhibits ITCH catalytic activity; the interaction is direct. Interacts with HGS and STAM; the interaction brings together HGS and STAM and promotes their recruitment to early endosomes. In terms of processing, autoubiquitinated.

The protein localises to the cytoplasm. Its subcellular location is the nucleus. It is found in the early endosome membrane. The protein resides in the lysosome membrane. It catalyses the reaction S-ubiquitinyl-[E2 ubiquitin-conjugating enzyme]-L-cysteine + [acceptor protein]-L-lysine = [E2 ubiquitin-conjugating enzyme]-L-cysteine + N(6)-ubiquitinyl-[acceptor protein]-L-lysine.. It participates in protein modification; protein ubiquitination. With respect to regulation, binding to PARP9 enhances DTX3L catalytic activity. In terms of biological role, E3 ubiquitin-protein ligase which, in association with ADP-ribosyltransferase PARP9, plays a role in DNA damage repair and in interferon-mediated antiviral responses. Monoubiquitinates several histones, including histone H2A, H2B, H3 and H4. In response to DNA damage, mediates monoubiquitination of 'Lys-91' of histone H4 (H4K91ub1). The exact role of H4K91ub1 in DNA damage response is still unclear but it may function as a licensing signal for additional histone H4 post-translational modifications such as H4 'Lys-20' methylation (H4K20me). PARP1-dependent PARP9-DTX3L-mediated ubiquitination promotes the rapid and specific recruitment of 53BP1/TP53BP1, UIMC1/RAP80, and BRCA1 to DNA damage sites. By monoubiquitinating histone H2B H2BC9/H2BJ and thereby promoting chromatin remodeling, positively regulates STAT1-dependent interferon-stimulated gene transcription and thus STAT1-mediated control of viral replication. Independently of its catalytic activity, promotes the sorting of chemokine receptor CXCR4 from early endosome to lysosome following CXCL12 stimulation by reducing E3 ligase ITCH activity and thus ITCH-mediated ubiquitination of endosomal sorting complex required for transport ESCRT-0 components HGS and STAM. In addition, required for the recruitment of HGS and STAM to early endosomes. The protein is E3 ubiquitin-protein ligase DTX3L (Dtx3l) of Mus musculus (Mouse).